Reading from the N-terminus, the 139-residue chain is Putative pre-16S rRNA nuclease (139 aa).

It belongs to the YqgF nuclease family.

It localises to the cytoplasm. Functionally, could be a nuclease involved in processing of the 5'-end of pre-16S rRNA. The polypeptide is Putative pre-16S rRNA nuclease (Haemophilus influenzae (strain PittEE)).